The following is a 250-amino-acid chain: DNA repair protein RecO (250 aa).

It belongs to the RecO family.

Its function is as follows. Involved in DNA repair and RecF pathway recombination. This is DNA repair protein RecO from Staphylococcus aureus (strain Mu3 / ATCC 700698).